A 567-amino-acid chain; its full sequence is Proline--tRNA ligase (567 aa).

Belongs to the class-II aminoacyl-tRNA synthetase family. ProS type 1 subfamily. As to quaternary structure, homodimer.

It localises to the cytoplasm. It carries out the reaction tRNA(Pro) + L-proline + ATP = L-prolyl-tRNA(Pro) + AMP + diphosphate. Catalyzes the attachment of proline to tRNA(Pro) in a two-step reaction: proline is first activated by ATP to form Pro-AMP and then transferred to the acceptor end of tRNA(Pro). As ProRS can inadvertently accommodate and process non-cognate amino acids such as alanine and cysteine, to avoid such errors it has two additional distinct editing activities against alanine. One activity is designated as 'pretransfer' editing and involves the tRNA(Pro)-independent hydrolysis of activated Ala-AMP. The other activity is designated 'posttransfer' editing and involves deacylation of mischarged Ala-tRNA(Pro). The misacylated Cys-tRNA(Pro) is not edited by ProRS. This Geobacillus sp. (strain WCH70) protein is Proline--tRNA ligase.